We begin with the raw amino-acid sequence, 427 residues long: MSRSEALFAQAQKHIPGGVNSPVRAFKSVGGTPLFFKHAEGAYVIDEDDKRYVDYVGSWGPMILGHGHPEVLDAVRNQLQHGLSYGAPTAMETEMADLVCSIVPSMEMVRMVSSGTEATMSAIRLARGYTGRDAIIKFEGCYHGHSDSLLVKAGSGLLTQGVPSSAGVPADFAKHTLTLPFNDIAAVEKTLAEVGQTVACIIVEPVAGNMNCVPPAPGFLEGLREQCDKHGVVLIFDEVMTGFRVSLGGAQGYYGITPDLSTFGKIVGGGMPVGCFGGKREIMGCIAPLGPVYQAGTLSGNPLAMAAGLTTLKLISRPGFHDELTAFTSRMLDGLQQRADAAGVPFVTTQAGAMFGLYFSGADDIVTFDDVMASDAERFKRFFHLMLEGGVYLAPSAFEAGFTSIAHGDKELQITLDAAERAFAKLK.

Lysine 265 is subject to N6-(pyridoxal phosphate)lysine.

This sequence belongs to the class-III pyridoxal-phosphate-dependent aminotransferase family. HemL subfamily. As to quaternary structure, homodimer. Pyridoxal 5'-phosphate is required as a cofactor.

The protein resides in the cytoplasm. It catalyses the reaction (S)-4-amino-5-oxopentanoate = 5-aminolevulinate. Its pathway is porphyrin-containing compound metabolism; protoporphyrin-IX biosynthesis; 5-aminolevulinate from L-glutamyl-tRNA(Glu): step 2/2. The protein is Glutamate-1-semialdehyde 2,1-aminomutase of Pseudomonas entomophila (strain L48).